The sequence spans 87 residues: Translation initiation factor IF-1 2 (87 aa).

The region spanning 1–72 (MAKEELLELD…TKGRINFRHK (72 aa)) is the S1-like domain.

The protein belongs to the IF-1 family. As to quaternary structure, component of the 30S ribosomal translation pre-initiation complex which assembles on the 30S ribosome in the order IF-2 and IF-3, IF-1 and N-formylmethionyl-tRNA(fMet); mRNA recruitment can occur at any time during PIC assembly.

The protein localises to the cytoplasm. Functionally, one of the essential components for the initiation of protein synthesis. Stabilizes the binding of IF-2 and IF-3 on the 30S subunit to which N-formylmethionyl-tRNA(fMet) subsequently binds. Helps modulate mRNA selection, yielding the 30S pre-initiation complex (PIC). Upon addition of the 50S ribosomal subunit IF-1, IF-2 and IF-3 are released leaving the mature 70S translation initiation complex. This Burkholderia ambifaria (strain ATCC BAA-244 / DSM 16087 / CCUG 44356 / LMG 19182 / AMMD) (Burkholderia cepacia (strain AMMD)) protein is Translation initiation factor IF-1 2.